A 371-amino-acid polypeptide reads, in one-letter code: Protein lifeguard 1 (371 aa).

A disordered region spans residues 1–145 (MSHEKSFLVS…EGPPSYYDNQ (145 aa)). Residues 14-49 (YPPPNPGYPGGPQPPMPPYAQPPYPGAPYPQPPFQP) are compositionally biased toward pro residues. Positions 84-98 (YPQEGYPQGPYPQGG) are enriched in low complexity. Pro residues predominate over residues 102-114 (GPYPQSPFPPNPY). 7 helical membrane passes run 165–185 (VFLV…VFTF), 197–217 (VWTY…LSCC), 228–248 (LVAL…IASF), 253–273 (AVIM…IFSM), 283–303 (MGVL…CIFI), 307–327 (ILEI…LAVD), and 346–366 (FAAL…LTII).

This sequence belongs to the BI1 family. LFG subfamily.

It localises to the membrane. Potential apoptotic regulator. This chain is Protein lifeguard 1 (GRINA), found in Homo sapiens (Human).